A 170-amino-acid chain; its full sequence is Large ribosomal subunit protein uL11 (170 aa).

The protein belongs to the universal ribosomal protein uL11 family. As to quaternary structure, part of the ribosomal stalk of the 50S ribosomal subunit. Interacts with L10 and the large rRNA to form the base of the stalk. L10 forms an elongated spine to which L12 dimers bind in a sequential fashion forming a multimeric L10(L12)X complex.

In terms of biological role, forms part of the ribosomal stalk which helps the ribosome interact with GTP-bound translation factors. The protein is Large ribosomal subunit protein uL11 of Saccharolobus islandicus (strain M.16.27) (Sulfolobus islandicus).